Consider the following 222-residue polypeptide: DNA-directed RNA polymerase V subunit 5A (222 aa).

It belongs to the archaeal Rpo5/eukaryotic RPB5 RNA polymerase subunit family. In terms of assembly, component of the RNA polymerase V complex. Expressed in roots, leaves, siliques and seeds, and to a lower level, in flower buds and flowers.

The protein resides in the nucleus. Functionally, DNA-dependent RNA polymerase catalyzes the transcription of DNA into RNA using the four ribonucleoside triphosphates as substrates. Component of RNA polymerase V involved in RNA-directed DNA methylation-dependent (RdDM) silencing of endogenous repeated sequences, including transposable elements. Required for establishment of DNA methylation. The sequence is that of DNA-directed RNA polymerase V subunit 5A (NRPE5A) from Arabidopsis thaliana (Mouse-ear cress).